A 251-amino-acid chain; its full sequence is Ubiquinone/menaquinone biosynthesis C-methyltransferase UbiE (251 aa).

S-adenosyl-L-methionine-binding positions include Thr-74, Asp-95, 123 to 124 (NA), and Ser-140.

This sequence belongs to the class I-like SAM-binding methyltransferase superfamily. MenG/UbiE family.

The catalysed reaction is a 2-demethylmenaquinol + S-adenosyl-L-methionine = a menaquinol + S-adenosyl-L-homocysteine + H(+). It catalyses the reaction a 2-methoxy-6-(all-trans-polyprenyl)benzene-1,4-diol + S-adenosyl-L-methionine = a 5-methoxy-2-methyl-3-(all-trans-polyprenyl)benzene-1,4-diol + S-adenosyl-L-homocysteine + H(+). The protein operates within quinol/quinone metabolism; menaquinone biosynthesis; menaquinol from 1,4-dihydroxy-2-naphthoate: step 2/2. Its pathway is cofactor biosynthesis; ubiquinone biosynthesis. Its function is as follows. Methyltransferase required for the conversion of demethylmenaquinol (DMKH2) to menaquinol (MKH2) and the conversion of 2-polyprenyl-6-methoxy-1,4-benzoquinol (DDMQH2) to 2-polyprenyl-3-methyl-6-methoxy-1,4-benzoquinol (DMQH2). The polypeptide is Ubiquinone/menaquinone biosynthesis C-methyltransferase UbiE (Klebsiella pneumoniae subsp. pneumoniae (strain ATCC 700721 / MGH 78578)).